The chain runs to 342 residues: Protein BMEI1586 (342 aa).

S90 (proton acceptor) is an active-site residue. Substrate-binding positions include 91 to 92, D251, and 256 to 257; these read GS and GT.

The protein belongs to the proline racemase family. As to quaternary structure, homotetramer.

The catalysed reaction is trans-4-hydroxy-L-proline = cis-4-hydroxy-D-proline. Functionally, in vitro, catalyzes the epimerization of trans-4-hydroxy-L-proline (t4LHyp) to cis-4-hydroxy-D-proline (c4DHyp) and that of trans-3-hydroxy-L-proline (t3LHyp) to cis-3-hydroxy-D-proline (c3DHyp), albeit with very low efficiency. The physiological substrate may be different. Displays neither proline racemase activity nor t3LHyp dehydratase activity. The protein is Protein BMEI1586 of Brucella melitensis biotype 1 (strain ATCC 23456 / CCUG 17765 / NCTC 10094 / 16M).